The sequence spans 200 residues: GTP cyclohydrolase 1 (200 aa).

Zn(2+) contacts are provided by Cys-87, His-90, and Cys-158.

This sequence belongs to the GTP cyclohydrolase I family. Toroid-shaped homodecamer, composed of two pentamers of five dimers.

The enzyme catalyses GTP + H2O = 7,8-dihydroneopterin 3'-triphosphate + formate + H(+). Its pathway is cofactor biosynthesis; 7,8-dihydroneopterin triphosphate biosynthesis; 7,8-dihydroneopterin triphosphate from GTP: step 1/1. The polypeptide is GTP cyclohydrolase 1 (Xanthomonas axonopodis pv. citri (strain 306)).